Here is a 426-residue protein sequence, read N- to C-terminus: Acetylglutamate kinase (426 aa).

Residues 1-252 are acetylglutamate kinase; it reads MASAKEISQY…PLESSVSITR (252 aa). Substrate-binding positions include 59–60, Arg81, and Asn170; that span reads AG. The tract at residues 253–426 is unknown; it reads PADLAKELFT…CATRQPTLLG (174 aa). The 152-residue stretch at 274–425 folds into the N-acetyltransferase domain; it reads ERVLRATSWD…HCATRQPTLL (152 aa).

This sequence in the N-terminal section; belongs to the acetylglutamate kinase family. ArgB subfamily.

It localises to the cytoplasm. The catalysed reaction is N-acetyl-L-glutamate + ATP = N-acetyl-L-glutamyl 5-phosphate + ADP. It participates in amino-acid biosynthesis; L-arginine biosynthesis; N(2)-acetyl-L-ornithine from L-glutamate: step 2/4. The protein is Acetylglutamate kinase (argB) of Xanthomonas campestris pv. campestris (strain ATCC 33913 / DSM 3586 / NCPPB 528 / LMG 568 / P 25).